The primary structure comprises 616 residues: MSSQKKVSSGNTTPSGLAGLASPLNDQQINLLQQISDLSPQQLAWVSGYFWGLSQSAAPSAVTPIAQAVSAVAAKPAGKLTIIFASQTGNAKGVAEALEQEAKAEGIAVQLFDASDYKGKNLANETHVIIVASTNGEGEAPDNAIELHEFLQSKKAPKLPNLQYGVIGLGDSSYEFFCQTGKDFDSYLAKLGATPFIERVDCDVDYDASAAQWRKQALEKVKDALSAGVEADVVQLPVAQLAAGHALYTKQKPYAATLLTSQKITGRDSGKDVRHVEIDLAGSGITYQPGDALGVWFENSGELANQVLAKVGLSGVESVDVDGESLSIHSALVSKFEITSSNPQQVEKFAQLSGSKKLLKLVEEKDKLREYAGNTQLVDLLAEKQTKLTAEELVGLLRRLTPRLYSIASSQTEVDEEVHLTVGLVEYDVKGEKRFGGASGYLAQRLEEGEQVKVFVENNNNFKLPADDNVPVIMVGPGTGIAPFRSFIQERDNRGAEGKNWLFFGDRTFTQDFLYQVEWQKYLKSGLLTKLDVAFSRDQAEKVYVQQRILENAAQVWQWIQEGAYLYVCGDANRMAKDVHQAFVAVAEQEGKMSRDDAEEFINDLRKAKRYQRDVY.

The region spanning 80-218 (LTIIFASQTG…SAAQWRKQAL (139 aa)) is the Flavodoxin-like domain. FMN contacts are provided by residues 86–91 (SQTGNA), 133–136 (STNG), and 169–178 (LGDSSYEFFC). An FAD-binding FR-type domain is found at 251–465 (QKPYAATLLT…VENNNNFKLP (215 aa)). FAD is bound by residues Thr339, Gly373, 403-406 (RLYS), 421-423 (TVG), Tyr427, and 436-439 (GGAS). NADP(+) contacts are provided by residues 536–537 (SR), 542–546 (KVYVQ), and Asp578. Residue Tyr616 coordinates FAD.

The protein belongs to the NADPH-dependent sulphite reductase flavoprotein subunit CysJ family. It in the N-terminal section; belongs to the flavodoxin family. This sequence in the C-terminal section; belongs to the flavoprotein pyridine nucleotide cytochrome reductase family. Alpha(8)-beta(8). The alpha component is a flavoprotein, the beta component is a hemoprotein. Requires FAD as cofactor. FMN serves as cofactor.

It catalyses the reaction hydrogen sulfide + 3 NADP(+) + 3 H2O = sulfite + 3 NADPH + 4 H(+). The protein operates within sulfur metabolism; hydrogen sulfide biosynthesis; hydrogen sulfide from sulfite (NADPH route): step 1/1. Component of the sulfite reductase complex that catalyzes the 6-electron reduction of sulfite to sulfide. This is one of several activities required for the biosynthesis of L-cysteine from sulfate. The flavoprotein component catalyzes the electron flow from NADPH -&gt; FAD -&gt; FMN to the hemoprotein component. The polypeptide is Sulfite reductase [NADPH] flavoprotein alpha-component (Vibrio vulnificus (strain CMCP6)).